Here is a 175-residue protein sequence, read N- to C-terminus: Alpha-crystallin B chain (175 aa).

Met-1 bears the N-acetylmethionine mark. Phosphoserine is present on Ser-19. O-linked (GlcNAc) serine glycosylation occurs at Ser-41. Phosphoserine occurs at positions 45 and 59. A sHSP domain is found at 56-164 (RAPSWFDTGL…PERTIPITRE (109 aa)). A Zn(2+)-binding site is contributed by His-83. The residue at position 92 (Lys-92) is an N6-acetyllysine; partial. Zn(2+) contacts are provided by His-104, Glu-106, His-111, and His-119. A disordered region spans residues 146–175 (NGPRKQVSGPERTIPITREEKPAVTAAPKK). The residue at position 166 (Lys-166) is an N6-acetyllysine. O-linked (GlcNAc) threonine glycosylation occurs at Thr-170.

The protein belongs to the small heat shock protein (HSP20) family. As to quaternary structure, heteromer composed of three CRYAA and one CRYAB subunits. Aggregates with homologous proteins, including the small heat shock protein HSPB1, to form large heteromeric complexes. Inter-subunit bridging via zinc ions enhances stability, which is crucial as there is no protein turn over in the lens. Interacts with HSPBAP1 and TTN/titin. Interacts with TMEM109; in the cellular response to DNA damage. Interacts with DES; binds rapidly during early stages of DES filament assembly and a reduced binding seen in the later stages. Interacts with TMED10; the interaction mediates the translocation from the cytoplasm into the ERGIC (endoplasmic reticulum-Golgi intermediate compartment) and thereby secretion. Interacts with ATP6V1A and with MTOR, forming a ternary complex. In terms of tissue distribution, lens as well as other tissues. Expressed in myocardial tissue.

It is found in the cytoplasm. The protein localises to the nucleus. The protein resides in the secreted. It localises to the lysosome. May contribute to the transparency and refractive index of the lens. Has chaperone-like activity, preventing aggregation of various proteins under a wide range of stress conditions. In lens epithelial cells, stabilizes the ATP6V1A protein, preventing its degradation by the proteasome. The sequence is that of Alpha-crystallin B chain from Homo sapiens (Human).